A 34-amino-acid polypeptide reads, in one-letter code: Photosystem II reaction center protein Psb30 (34 aa).

A helical transmembrane segment spans residues 6–26 (VIGQLVSTGAIMLLGPAIIIL).

Belongs to the Psb30/Ycf12 family. PSII is composed of 1 copy each of membrane proteins PsbA, PsbB, PsbC, PsbD, PsbE, PsbF, PsbH, PsbI, PsbJ, PsbK, PsbL, PsbM, PsbT, PsbX, PsbY, PsbZ, Psb30/Ycf12, peripheral proteins of the oxygen-evolving complex and a large number of cofactors. It forms dimeric complexes.

The protein resides in the plastid. Its subcellular location is the chloroplast thylakoid membrane. A core subunit of photosystem II (PSII), probably helps stabilize the reaction center. This chain is Photosystem II reaction center protein Psb30, found in Thalassiosira pseudonana (Marine diatom).